Consider the following 260-residue polypeptide: DNA repair protein RecO (260 aa).

The protein belongs to the RecO family.

Its function is as follows. Involved in DNA repair and RecF pathway recombination. This Streptococcus suis (strain 98HAH33) protein is DNA repair protein RecO.